A 376-amino-acid polypeptide reads, in one-letter code: Histidinol dehydrogenase (376 aa).

Residues Y100 and N182 each coordinate NAD(+). The substrate site is built by S205, Q227, and H230. Q227 and H230 together coordinate Zn(2+). Active-site proton acceptor residues include E275 and H276. Substrate is bound by residues H276, D309, E363, and H368. D309 is a binding site for Zn(2+). H368 contacts Zn(2+).

This sequence belongs to the histidinol dehydrogenase family. It depends on Zn(2+) as a cofactor.

It catalyses the reaction L-histidinol + 2 NAD(+) + H2O = L-histidine + 2 NADH + 3 H(+). Its pathway is amino-acid biosynthesis; L-histidine biosynthesis; L-histidine from 5-phospho-alpha-D-ribose 1-diphosphate: step 9/9. Catalyzes the sequential NAD-dependent oxidations of L-histidinol to L-histidinaldehyde and then to L-histidine. The chain is Histidinol dehydrogenase from Thermococcus kodakarensis (strain ATCC BAA-918 / JCM 12380 / KOD1) (Pyrococcus kodakaraensis (strain KOD1)).